Consider the following 663-residue polypeptide: Protein MICRORCHIDIA 6 (663 aa).

Residues 1-77 (MSHDRSVNVS…PADDAGVTSS (77 aa)) form a disordered region. The segment covering 49 to 62 (SVGQSAGQSSTSVV) has biased composition (polar residues). Residues 552 to 559 (KRKEHPDS) carry the Nuclear localization signal motif. Residues 614-659 (DRKVRSQNLEVKAMNLRSELENYKSEYERLMVELQALDLVKDEHRR) adopt a coiled-coil conformation.

The protein belongs to the MORC ATPase protein family. In terms of assembly, homodimer and heterodimers with MORC1/CRT1 and MORC2. Interacts directly with SUVH9. Component of an RNA-directed DNA methylation (RdDM) complex that contains at least MORC6, MORC1/CRT1, MORC2, SWI3D and SUVH9. Stimulated by interaction with DMS3. Interacts with IDN2, SWI3B, SWI3C and SWI3D. Mg(2+) serves as cofactor. Requires Mn(2+) as cofactor.

The protein resides in the nucleus. With respect to regulation, stimulated by DMS3. Functionally, involved in RNA-directed DNA methylation (RdDM) as a component of the RdDM machinery and required for gene silencing. Together with SUVH2 and SUVH9, regulates the silencing of some transposable elements (TEs). Exhibits ATPase activity. May also be involved in the regulation of chromatin architecture/condensation to maintain gene silencing. Binds DNA/RNA in a non-specific manner and exhibits endonuclease activity. Probably involved in DNA repair. Positive regulator of defense against the oomycete Hyaloperonospora arabidopsidis (Hpa). This is Protein MICRORCHIDIA 6 from Arabidopsis thaliana (Mouse-ear cress).